A 52-amino-acid polypeptide reads, in one-letter code: Phospholamban (52 aa).

Met1 bears the N-acetylmethionine mark. Residues 1 to 31 (MEKVQYLTRSAIRRASTIEMPQQARQNLQNL) are Cytoplasmic-facing. Ser16 is modified (phosphoserine; by PKA). Phosphothreonine; by CaMK2 is present on Thr17. A helical membrane pass occupies residues 32-52 (FINFCLILICLLLICIIVMLL). Cys36 carries S-palmitoyl cysteine lipidation.

This sequence belongs to the phospholamban family. Homopentamer. Can also form heterooligomers with other sarcoplasmic/endoplasmic reticulum calcium ATPase (SERCA) regulators ARLN, ERLN, SLN and STRIT1/DWORF. Monomer. Interacts with HAX1. Interacts as a monomer with ATP2A2; the interaction decreases ATP2A2 Ca(2+) affinity. Interacts with VMP1; VMP1 competes with PLN and SLN to prevent them from forming an inhibitory complex with ATP2A2. Interacts with S100A1 in a Ca(2+)-dependent manner. Phosphorylated at Thr-17 by CaMK2, and in response to beta-adrenergic stimulation. Phosphorylation by DMPK may stimulate sarcoplasmic reticulum calcium uptake in cardiomyocytes. Phosphorylation by PKA abolishes the inhibition of ATP2A2-mediated calcium uptake. Post-translationally, palmitoylated by ZDHHC16, promoting formation of the homopentamer. In terms of processing, in elongated spermatids, proteolytically cleaved by SPPL2C which modulates intracellular Ca(2+) homeostasis. Expressed in testis (at protein level). In brain, expressed specifically in GABAergic GAD67+ neurons of the thalamic reticular nucleus where it colocalizes with ATP2A2/SERCA2 (at protein level). Expressed in the bladder and in the atria and ventricles of the heart.

The protein resides in the endoplasmic reticulum membrane. It is found in the sarcoplasmic reticulum membrane. Its subcellular location is the mitochondrion membrane. The protein localises to the membrane. Reversibly inhibits the activity of ATP2A2/SERCA2 in cardiac sarcoplasmic reticulum by decreasing the apparent affinity of the ATPase for Ca(2+). Binds preferentially to the ATP-bound E1 conformational form of ATP2A2 which predominates at low Ca(2+) concentrations during the diastolic phase of the cardiac cycle. Inhibits ATP2A2 Ca(2+) affinity by disrupting its allosteric activation by ATP. Modulates the contractility of the heart muscle in response to physiological stimuli via its effects on ATP2A2. Modulates calcium re-uptake during muscle relaxation and plays an important role in calcium homeostasis in the heart muscle. The degree of ATP2A2 inhibition depends on the oligomeric state of PLN. ATP2A2 inhibition is alleviated by PLN phosphorylation. Also inhibits the activity of ATP2A3/SERCA3. Controls intracellular Ca(2+) levels in elongated spermatids and may play a role in germ cell differentiation. In the thalamic reticular nucleus of the brain, plays a role in the regulation of sleep patterns and executive functioning. The sequence is that of Phospholamban from Mus musculus (Mouse).